The sequence spans 191 residues: COP9 signalosome complex subunit 8 (191 aa).

The region spanning 6 to 179 is the PCI domain; it reads MMAELDEKLL…VSLVPNEQQL (174 aa).

It belongs to the CSN8 family. Component of the CSN complex, probably composed of cops1, cops2, cops3, cops4, cops5, cops6, cops7, cops8 and cops9.

Its subcellular location is the cytoplasm. It localises to the nucleus. Component of the COP9 signalosome complex (CSN), a complex involved in various cellular and developmental processes. The CSN complex is an essential regulator of the ubiquitin (Ubl) conjugation pathway by mediating the deneddylation of the cullin subunits of E3 ligase complexes, leading to modify the Ubl ligase activity. This chain is COP9 signalosome complex subunit 8 (cops8), found in Danio rerio (Zebrafish).